Reading from the N-terminus, the 609-residue chain is Glutamine--fructose-6-phosphate aminotransferase [isomerizing] (609 aa).

Cysteine 2 serves as the catalytic Nucleophile; for GATase activity. A Glutamine amidotransferase type-2 domain is found at 2–218; sequence CGIVGAIAQR…EGDIAEITRR (217 aa). SIS domains are found at residues 286-426 and 458-599; these read ADEL…LKGL and LAED…VDQP. Lysine 604 functions as the For Fru-6P isomerization activity in the catalytic mechanism.

In terms of assembly, homodimer.

The protein localises to the cytoplasm. It catalyses the reaction D-fructose 6-phosphate + L-glutamine = D-glucosamine 6-phosphate + L-glutamate. In terms of biological role, catalyzes the first step in hexosamine metabolism, converting fructose-6P into glucosamine-6P using glutamine as a nitrogen source. The protein is Glutamine--fructose-6-phosphate aminotransferase [isomerizing] of Escherichia coli O157:H7.